The chain runs to 589 residues: Phenylalanine--tRNA ligase beta subunit (589 aa).

One can recognise a B5 domain in the interval 302–379 (LPYRKEMVRA…IAYGYNNIQM (78 aa)). Positions 357, 363, 366, and 367 each coordinate Mg(2+).

Belongs to the phenylalanyl-tRNA synthetase beta subunit family. Type 2 subfamily. In terms of assembly, heterotetramer; dimer of two heterodimers formed by FARSA and FARSB. Requires Mg(2+) as cofactor.

It localises to the cytoplasm. The catalysed reaction is tRNA(Phe) + L-phenylalanine + ATP = L-phenylalanyl-tRNA(Phe) + AMP + diphosphate + H(+). The polypeptide is Phenylalanine--tRNA ligase beta subunit (Farsb) (Mus musculus (Mouse)).